The primary structure comprises 419 residues: Probable serine/threonine-protein kinase DDB_G0290859 (419 aa).

A Protein kinase domain is found at 40–387 (YDIISTIGSG…ASTIKKHPFF (348 aa)). ATP contacts are provided by residues 46-54 (IGSGSYGEV) and K69. D173 acts as the Proton acceptor in catalysis. In terms of domain architecture, AGC-kinase C-terminal spans 388–419 (EGINWEEMANFNVEPPFKPTLSSDDDISYFTN).

The protein belongs to the protein kinase superfamily. AGC Ser/Thr protein kinase family.

The enzyme catalyses L-seryl-[protein] + ATP = O-phospho-L-seryl-[protein] + ADP + H(+). The catalysed reaction is L-threonyl-[protein] + ATP = O-phospho-L-threonyl-[protein] + ADP + H(+). This chain is Probable serine/threonine-protein kinase DDB_G0290859, found in Dictyostelium discoideum (Social amoeba).